Here is a 255-residue protein sequence, read N- to C-terminus: Protein C activator (255 aa).

Residues 1–18 form the signal peptide; sequence MVLIRVLANLLILHLSYA. Positions 19-24 are excised as a propeptide; that stretch reads QKSSEL. Positions 25-246 constitute a Peptidase S1 domain; it reads VIGGDECNIN…YTDWIQSIIS (222 aa). 6 disulfide bridges follow: Cys31/Cys162, Cys49/Cys65, Cys97/Cys253, Cys141/Cys207, Cys173/Cys186, and Cys197/Cys222. Asn45 is a glycosylation site (N-linked (GlcNAc...) asparagine). His64 functions as the Charge relay system in the catalytic mechanism. An N-linked (GlcNAc...) asparagine glycan is attached at Asn102. Asp109 (charge relay system) is an active-site residue. Residue Asn153 is glycosylated (N-linked (GlcNAc...) asparagine). The active-site Charge relay system is the Ser201.

The protein belongs to the peptidase S1 family. Snake venom subfamily. Monomer. In terms of tissue distribution, expressed by the venom gland.

It localises to the secreted. Snake venom serine protease that selectively cleaves the heavy chain of protein C (PROC). This activation is thrombomodulin-independent. In Agkistrodon piscivorus leucostoma (Western cottonmouth), this protein is Protein C activator.